Reading from the N-terminus, the 478-residue chain is Serine hydroxymethyltransferase, cytosolic (478 aa).

An N6-(pyridoxal phosphate)lysine modification is found at Lys251.

It belongs to the SHMT family. Homotetramer. Identified in complex with FAM175B and the other subunits of the BRISC complex, at least composed of FAM175B/ABRO1, BRCC3/BRCC36, BABAM2 and BABAM1/NBA1. Pyridoxal 5'-phosphate serves as cofactor.

The protein resides in the cytoplasm. It carries out the reaction (6R)-5,10-methylene-5,6,7,8-tetrahydrofolate + glycine + H2O = (6S)-5,6,7,8-tetrahydrofolate + L-serine. Its pathway is one-carbon metabolism; tetrahydrofolate interconversion. Functionally, interconversion of serine and glycine. This is Serine hydroxymethyltransferase, cytosolic (Shmt1) from Mus musculus (Mouse).